The sequence spans 407 residues: Imidazolonepropionase (407 aa).

Fe(3+) is bound by residues H68 and H70. Zn(2+) contacts are provided by H68 and H70. 4-imidazolone-5-propanoate is bound by residues R77, Y140, and H173. Y140 provides a ligand contact to N-formimidoyl-L-glutamate. Position 238 (H238) interacts with Fe(3+). H238 provides a ligand contact to Zn(2+). Q241 lines the 4-imidazolone-5-propanoate pocket. D313 provides a ligand contact to Fe(3+). D313 serves as a coordination point for Zn(2+). Residues N315 and G317 each contribute to the N-formimidoyl-L-glutamate site. T318 provides a ligand contact to 4-imidazolone-5-propanoate.

The protein belongs to the metallo-dependent hydrolases superfamily. HutI family. Requires Zn(2+) as cofactor. It depends on Fe(3+) as a cofactor.

It localises to the cytoplasm. The enzyme catalyses 4-imidazolone-5-propanoate + H2O = N-formimidoyl-L-glutamate. The protein operates within amino-acid degradation; L-histidine degradation into L-glutamate; N-formimidoyl-L-glutamate from L-histidine: step 3/3. Catalyzes the hydrolytic cleavage of the carbon-nitrogen bond in imidazolone-5-propanoate to yield N-formimidoyl-L-glutamate. It is the third step in the universal histidine degradation pathway. This chain is Imidazolonepropionase, found in Burkholderia cenocepacia (strain ATCC BAA-245 / DSM 16553 / LMG 16656 / NCTC 13227 / J2315 / CF5610) (Burkholderia cepacia (strain J2315)).